We begin with the raw amino-acid sequence, 337 residues long: Nicotinate-nucleotide--dimethylbenzimidazole phosphoribosyltransferase (337 aa).

The active-site Proton acceptor is the glutamate 305.

It belongs to the CobT family.

The enzyme catalyses 5,6-dimethylbenzimidazole + nicotinate beta-D-ribonucleotide = alpha-ribazole 5'-phosphate + nicotinate + H(+). It participates in nucleoside biosynthesis; alpha-ribazole biosynthesis; alpha-ribazole from 5,6-dimethylbenzimidazole: step 1/2. Functionally, catalyzes the synthesis of alpha-ribazole-5'-phosphate from nicotinate mononucleotide (NAMN) and 5,6-dimethylbenzimidazole (DMB). The protein is Nicotinate-nucleotide--dimethylbenzimidazole phosphoribosyltransferase of Jannaschia sp. (strain CCS1).